Here is a 534-residue protein sequence, read N- to C-terminus: ATP-dependent rRNA helicase RRP3 (534 aa).

The interval 67 to 107 (KQQALQKQQKQQKQQEQENANHNQTESSLSSSSSTTSSSIT) is disordered. Low complexity-rich tracts occupy residues 68–80 (QQALQKQQKQQKQ) and 91–107 (TESSLSSSSSTTSSSIT). The Q motif motif lies at 118-146 (KTFKELNLVPDLLESIESMKFTKPTPIQS). The region spanning 149-320 (IPHALEGKDI…RASLHNPVRV (172 aa)) is the Helicase ATP-binding domain. Residue 162–169 (AQTGSGKT) coordinates ATP. Residues 268 to 271 (DEAD) carry the DEAD box motif. The 146-residue stretch at 347 to 492 (ILIHLLNEFM…EDKPPKEVLD (146 aa)) folds into the Helicase C-terminal domain. Basic and acidic residues-rich tracts occupy residues 505-517 (AIRQTKEIHDKRN) and 525-534 (NRDDADREER). The segment at 505–534 (AIRQTKEIHDKRNGGGGRRRNRDDADREER) is disordered.

Belongs to the DEAD box helicase family. DDX47/RRP3 subfamily. In terms of assembly, interacts with the SSU processome.

The protein resides in the nucleus. It carries out the reaction ATP + H2O = ADP + phosphate + H(+). In terms of biological role, ATP-dependent rRNA helicase required for pre-ribosomal RNA processing. Involved in the maturation of the 35S-pre-rRNA and to its cleavage to mature 18S rRNA. This Candida albicans (strain SC5314 / ATCC MYA-2876) (Yeast) protein is ATP-dependent rRNA helicase RRP3.